Here is a 175-residue protein sequence, read N- to C-terminus: Translation initiation factor IF-3 (175 aa).

Belongs to the IF-3 family. In terms of assembly, monomer.

Its subcellular location is the cytoplasm. Its function is as follows. IF-3 binds to the 30S ribosomal subunit and shifts the equilibrium between 70S ribosomes and their 50S and 30S subunits in favor of the free subunits, thus enhancing the availability of 30S subunits on which protein synthesis initiation begins. The protein is Translation initiation factor IF-3 of Chlamydia trachomatis serovar D (strain ATCC VR-885 / DSM 19411 / UW-3/Cx).